Here is a 59-residue protein sequence, read N- to C-terminus: Large ribosomal subunit protein bL32 (59 aa).

Residues 1-24 (MAVQQNKKSPSKRGMHRSHDFLTS) are disordered.

This sequence belongs to the bacterial ribosomal protein bL32 family.

This chain is Large ribosomal subunit protein bL32, found in Ralstonia nicotianae (strain ATCC BAA-1114 / GMI1000) (Ralstonia solanacearum).